Consider the following 65-residue polypeptide: Large ribosomal subunit protein bL35 (65 aa).

Residues 1-43 (MPKMKTRRGAAKRFAKTGSGKFKRRKQGLRHILTKKTAKRKSR) are compositionally biased toward basic residues. Residues 1–49 (MPKMKTRRGAAKRFAKTGSGKFKRRKQGLRHILTKKTAKRKSRLGQSAT) are disordered.

Belongs to the bacterial ribosomal protein bL35 family.

The sequence is that of Large ribosomal subunit protein bL35 from Maridesulfovibrio salexigens (strain ATCC 14822 / DSM 2638 / NCIMB 8403 / VKM B-1763) (Desulfovibrio salexigens).